Here is a 238-residue protein sequence, read N- to C-terminus: Fatty acid metabolism regulator protein (238 aa).

The HTH gntR-type domain occupies 6 to 74; sequence QSPAGFAEEY…HGKPTKVNNF (69 aa). A DNA-binding region (H-T-H motif) is located at residues 34–53; that stretch reads ERELSELIGVTRTTLREVLQ.

Homodimer.

The protein localises to the cytoplasm. Multifunctional regulator of fatty acid metabolism. The chain is Fatty acid metabolism regulator protein from Erwinia tasmaniensis (strain DSM 17950 / CFBP 7177 / CIP 109463 / NCPPB 4357 / Et1/99).